The primary structure comprises 541 residues: Beta-hexosaminidase subunit A2 (541 aa).

An N-terminal signal peptide occupies residues 1-21 (MINKFLTIFLIFSIVIIKVLS). The Proton donor role is filled by Glu314. Asn322, Asn336, Asn356, Asn435, and Asn483 each carry an N-linked (GlcNAc...) asparagine glycan.

Belongs to the glycosyl hydrolase 20 family.

The protein localises to the lysosome. It carries out the reaction Hydrolysis of terminal non-reducing N-acetyl-D-hexosamine residues in N-acetyl-beta-D-hexosaminides.. Its function is as follows. Responsible for the degradation of GM2 gangliosides, and a variety of other molecules containing terminal N-acetyl hexosamines. The sequence is that of Beta-hexosaminidase subunit A2 (hexa2) from Dictyostelium discoideum (Social amoeba).